Reading from the N-terminus, the 780-residue chain is Nuclear cap-binding protein subunit 1 (780 aa).

The segment at 1 to 25 (MSSYRGSTRPRKRTREGENYGFRPH) is disordered. Serine 29 is modified (phosphoserine). Positions 34-249 (AARIKKDITF…KQLILSREND (216 aa)) constitute an MIF4G domain. A disordered region spans residues 738 to 780 (ANEPVQENTSEEQEDTKMQPVDAVDEQPSENNQTAADATNEEK).

Belongs to the NCBP1 family. Component of the nuclear cap-binding complex (CBC), a heterodimer composed of cbc1 and cbc2 that interacts with capped RNAs.

It is found in the cytoplasm. The protein localises to the perinuclear region. It localises to the nucleus. Its function is as follows. Component of the CBC complex, which binds cotranscriptionally to the 5'-cap of pre-mRNAs and is involved in maturation, export and degradation of nuclear mRNAs. This chain is Nuclear cap-binding protein subunit 1 (cbc1), found in Schizosaccharomyces pombe (strain 972 / ATCC 24843) (Fission yeast).